The primary structure comprises 1177 residues: Lon protease homolog, mitochondrial (1177 aa).

Disordered regions lie at residues 72-197 and 353-386; these read RTNS…KSPA and AKKAKSGKTEDSKHDSKVTSKDGKETTEKYDSST. A compositionally biased stretch (basic and acidic residues) spans 103–150; that stretch reads RGRELWVQEKDKSDKPEKSDKPDKTDKTDKDKPEKQDKDKTDKPEKTK. Residues 154 to 182 are compositionally biased toward low complexity; the sequence is TPSSTASTGAGEAAAPPSAPPSGSGSSSS. Residues 203–505 enclose the Lon N-terminal domain; it reads ILAVPISDRP…RALILLKREH (303 aa). The span at 353–383 shows a compositional bias: basic and acidic residues; it reads AKKAKSGKTEDSKHDSKVTSKDGKETTEKYD. Residue 657–664 participates in ATP binding; that stretch reads GPPGVGKT. The span at 883–916 shows a compositional bias: basic and acidic residues; sequence EKDKESAEKKTTKSKSKEVNEEPAAKEEKDKATE. The disordered stretch occupies residues 883–932; the sequence is EKDKESAEKKTTKSKSKEVNEEPAAKEEKDKATESAESSETKVGTKAPPV. Positions 964 to 1150 constitute a Lon proteolytic domain; it reads DPPPGVVMGL…QDVYDVVFQG (187 aa). Active-site residues include S1056 and K1099.

The protein belongs to the peptidase S16 family. In terms of assembly, homohexamer or homoheptamer. Organized in a ring with a central cavity.

The protein resides in the mitochondrion matrix. It catalyses the reaction Hydrolysis of proteins in presence of ATP.. In terms of biological role, ATP-dependent serine protease that mediates the selective degradation of misfolded, unassembled or oxidatively damaged polypeptides as well as certain short-lived regulatory proteins in the mitochondrial matrix. May also have a chaperone function in the assembly of inner membrane protein complexes. Participates in the regulation of mitochondrial gene expression and in the maintenance of the integrity of the mitochondrial genome. Binds to mitochondrial DNA in a site-specific manner. This Yarrowia lipolytica (strain CLIB 122 / E 150) (Yeast) protein is Lon protease homolog, mitochondrial.